Consider the following 316-residue polypeptide: BTB/POZ domain-containing adapter for CUL3-mediated RhoA degradation protein 2 (316 aa).

Residues 28 to 96 (KYVQLNVGGS…LRDDTITLPQ (69 aa)) form the BTB domain. The span at 268–279 (EATSRSRSQASP) shows a compositional bias: polar residues. The interval 268–287 (EATSRSRSQASPSEDEETFE) is disordered. Position 278 is a phosphoserine (Ser278). Position 280 is a phosphoserine; by CK2 (Ser280).

The protein belongs to the BACURD family. As to quaternary structure, component of the BCR(TNFAIP1) E3 ubiquitin ligase complex, at least composed of CUL3, TNFAIP1/BACURD2 and RBX1. Interacts with RHOA; with a preference for RhoA-GDP. Interacts with RHOB. Interacts with PCNA. Interacts with CSNK2B. Phosphorylation at Ser-280 by CK2 facilitates the nucleus localization and increases interaction with PCNA.

It localises to the cytoplasm. It is found in the nucleus. The protein localises to the endosome. Its pathway is protein modification; protein ubiquitination. Functionally, substrate-specific adapter of a BCR (BTB-CUL3-RBX1) E3 ubiquitin-protein ligase complex involved in regulation of cytoskeleton structure. The BCR(TNFAIP1) E3 ubiquitin ligase complex mediates the ubiquitination of RHOA, leading to its degradation by the proteasome, thereby regulating the actin cytoskeleton and cell migration. Its interaction with RHOB may regulate apoptosis. May enhance the PCNA-dependent DNA polymerase delta activity. This Homo sapiens (Human) protein is BTB/POZ domain-containing adapter for CUL3-mediated RhoA degradation protein 2 (TNFAIP1).